A 157-amino-acid chain; its full sequence is SsrA-binding protein (157 aa).

The segment at 132–157 (EHDKRDTIKEREGKREVERAMKSRHR) is disordered.

This sequence belongs to the SmpB family.

The protein resides in the cytoplasm. In terms of biological role, required for rescue of stalled ribosomes mediated by trans-translation. Binds to transfer-messenger RNA (tmRNA), required for stable association of tmRNA with ribosomes. tmRNA and SmpB together mimic tRNA shape, replacing the anticodon stem-loop with SmpB. tmRNA is encoded by the ssrA gene; the 2 termini fold to resemble tRNA(Ala) and it encodes a 'tag peptide', a short internal open reading frame. During trans-translation Ala-aminoacylated tmRNA acts like a tRNA, entering the A-site of stalled ribosomes, displacing the stalled mRNA. The ribosome then switches to translate the ORF on the tmRNA; the nascent peptide is terminated with the 'tag peptide' encoded by the tmRNA and targeted for degradation. The ribosome is freed to recommence translation, which seems to be the essential function of trans-translation. The sequence is that of SsrA-binding protein from Paracidovorax citrulli (strain AAC00-1) (Acidovorax citrulli).